The sequence spans 426 residues: Enolase (426 aa).

Residue Gln-163 participates in (2R)-2-phosphoglycerate binding. Glu-205 acts as the Proton donor in catalysis. Residues Asp-242, Glu-283, and Asp-310 each contribute to the Mg(2+) site. Lys-335, Arg-364, Ser-365, and Lys-386 together coordinate (2R)-2-phosphoglycerate. The Proton acceptor role is filled by Lys-335.

It belongs to the enolase family. Mg(2+) is required as a cofactor.

The protein resides in the cytoplasm. Its subcellular location is the secreted. The protein localises to the cell surface. It carries out the reaction (2R)-2-phosphoglycerate = phosphoenolpyruvate + H2O. It participates in carbohydrate degradation; glycolysis; pyruvate from D-glyceraldehyde 3-phosphate: step 4/5. In terms of biological role, catalyzes the reversible conversion of 2-phosphoglycerate (2-PG) into phosphoenolpyruvate (PEP). It is essential for the degradation of carbohydrates via glycolysis. The chain is Enolase from Arthrobacter sp. (strain FB24).